The chain runs to 901 residues: Glutamate receptor 2.1 (901 aa).

The first 25 residues, 1-25 (MKRENNLVLSLLFFVIVFLMQVGEA), serve as a signal peptide directing secretion. Topologically, residues 26–574 (QNRITNVNVG…SSTIFLMPLT (549 aa)) are extracellular. N-linked (GlcNAc...) asparagine glycosylation is found at Asn-46, Asn-53, Asn-204, Asn-267, Asn-331, Asn-342, Asn-461, Asn-477, and Asn-536. The helical transmembrane segment at 575–595 (LALWLISLLSFFIIGLVVWVL) threads the bilayer. The Cytoplasmic portion of the chain corresponds to 596-604 (EHRVNPDFD). Residues 605–625 (GPGQYQLSTIFWFSFSIMVFA) traverse the membrane as a helical segment. The Cytoplasmic segment spans residues 626-629 (PRER). The chain crosses the membrane as a helical span at residues 630–650 (VLSFWARVVVIIWYFLVLVLT). Over 651-823 (QSYTASLASL…VSFRQLGFDS (173 aa)) the chain is Extracellular. The helical transmembrane segment at 824–844 (FWVLFLVAAIVCTMALLKFVY) threads the bilayer. The Cytoplasmic portion of the chain corresponds to 845–901 (QFLKENPNQRNLRVLWEKFNEPDQKSYIKDVTKCQCSSGQGMPKNGQEGANAVNNGN).

The protein belongs to the glutamate-gated ion channel (TC 1.A.10.1) family. In terms of assembly, may form heteromers. Expressed predominantly in roots. First strongly detected in all cell types of the root except at the apex. Later expressed at the root-shoot junction.

Its subcellular location is the membrane. In terms of biological role, glutamate-gated receptor that probably acts as a non-selective cation channel. May be involved in light-signal transduction and calcium homeostasis via the regulation of calcium influx into cells. This chain is Glutamate receptor 2.1 (GLR2.1), found in Arabidopsis thaliana (Mouse-ear cress).